We begin with the raw amino-acid sequence, 955 residues long: Structure-specific endonuclease subunit SLX4 (955 aa).

Disordered stretches follow at residues glutamine 75 to serine 173, proline 189 to arginine 231, glycine 352 to arginine 376, glutamate 539 to isoleucine 608, proline 621 to arginine 648, alanine 705 to aspartate 784, and leucine 819 to serine 846. Positions arginine 123–arginine 137 are enriched in basic residues. The segment covering asparagine 150–glutamine 159 has biased composition (polar residues). The segment covering proline 189–threonine 198 has biased composition (low complexity). Basic residues predominate over residues threonine 209–lysine 225. The span at glycine 352–glutamine 362 shows a compositional bias: polar residues. Over residues glutamate 539–glycine 551 the composition is skewed to basic and acidic residues. A compositionally biased stretch (polar residues) spans serine 579–threonine 601. Composition is skewed to low complexity over residues alanine 705 to alanine 720 and lysine 727 to serine 737. Basic residues-rich tracts occupy residues proline 738–lysine 748 and lysine 767–asparagine 776. Positions serine 828–serine 841 are enriched in low complexity.

It belongs to the SLX4 family. Forms a heterodimer with SLX1. Phosphorylated in response to DNA damage.

It localises to the nucleus. Its function is as follows. Regulatory subunit of the SLX1-SLX4 structure-specific endonuclease that resolves DNA secondary structures generated during DNA repair and recombination. Has endonuclease activity towards branched DNA substrates, introducing single-strand cuts in duplex DNA close to junctions with ss-DNA. In Pyricularia oryzae (strain 70-15 / ATCC MYA-4617 / FGSC 8958) (Rice blast fungus), this protein is Structure-specific endonuclease subunit SLX4.